Consider the following 491-residue polypeptide: UDP-N-acetylmuramate--L-alanine ligase (491 aa).

126 to 132 contacts ATP; sequence GTHGKTT.

This sequence belongs to the MurCDEF family.

Its subcellular location is the cytoplasm. The catalysed reaction is UDP-N-acetyl-alpha-D-muramate + L-alanine + ATP = UDP-N-acetyl-alpha-D-muramoyl-L-alanine + ADP + phosphate + H(+). The protein operates within cell wall biogenesis; peptidoglycan biosynthesis. Functionally, cell wall formation. This is UDP-N-acetylmuramate--L-alanine ligase from Shigella flexneri.